Consider the following 118-residue polypeptide: Aspartate 1-decarboxylase (118 aa).

Ser25 (schiff-base intermediate with substrate; via pyruvic acid) is an active-site residue. Ser25 is subject to Pyruvic acid (Ser). Thr57 serves as a coordination point for substrate. The active-site Proton donor is Tyr58. Substrate is bound at residue 73–75 (GAA).

It belongs to the PanD family. As to quaternary structure, heterooctamer of four alpha and four beta subunits. It depends on pyruvate as a cofactor. Post-translationally, is synthesized initially as an inactive proenzyme, which is activated by self-cleavage at a specific serine bond to produce a beta-subunit with a hydroxyl group at its C-terminus and an alpha-subunit with a pyruvoyl group at its N-terminus.

The protein resides in the cytoplasm. It carries out the reaction L-aspartate + H(+) = beta-alanine + CO2. Its pathway is cofactor biosynthesis; (R)-pantothenate biosynthesis; beta-alanine from L-aspartate: step 1/1. Its function is as follows. Catalyzes the pyruvoyl-dependent decarboxylation of aspartate to produce beta-alanine. The sequence is that of Aspartate 1-decarboxylase from Syntrophomonas wolfei subsp. wolfei (strain DSM 2245B / Goettingen).